Here is a 914-residue protein sequence, read N- to C-terminus: Transcription factor AZF1 (914 aa).

Disordered stretches follow at residues 1–63 (MPPP…ESIS), 93–124 (STGGPSSGGAYSNLPRLSTSSTHQPPDLSQIG), and 138–275 (QQLQ…NSNQ). Over residues 13 to 34 (QAGQNESQNQSSGEAGEQNQEH) the composition is skewed to polar residues. The segment covering 44 to 56 (QSQPASSQPQHQQ) has biased composition (low complexity). S61 is modified (phosphoserine). A compositionally biased stretch (polar residues) spans 107–116 (PRLSTSSTHQ). The tract at residues 136 to 158 (QQQQLQNQHRQQQQQQQQQSHQQ) is polyglutamine domain. Positions 138–158 (QQLQNQHRQQQQQQQQQSHQQ) are enriched in low complexity. Positions 164-194 (PSFSTGLTGSSSQYQFLPRNDNTSQPPSKRN) are enriched in polar residues. 2 stretches are compositionally biased toward low complexity: residues 206 to 222 (FEFFSMQQSQQPQFQPS) and 245 to 275 (SNGTNNSGNMNTNADYESFFNTGTNNSNSNQ). Phosphoserine is present on residues S286 and S325. The disordered stretch occupies residues 326-415 (LSVNNKANGD…STDTTSNSRK (90 aa)). Residues 359-390 (DSSNNNNNNNNNNNNENNNDNNNDNNDNSINS) show a composition bias toward low complexity. Residues 362–386 (NNNNNNNNNNNNENNNDNNNDNNDN) are polyasparagine domain. Residues 391–412 (ATSTNIPNQEDHSLASTDTTSN) show a composition bias toward polar residues. 4 consecutive C2H2-type zinc fingers follow at residues 593 to 615 (HECPYCHRLFSQATHLEVHVRSH), 621 to 643 (FVCDYCGKRFTQGGNLRTHERLH), 649 to 671 (YSCDICDKKFSRKGNLAAHLVTH), and 677 to 702 (FVCKLENCNKTFTQLGNMKAHQNRFH). 2 disordered regions span residues 743 to 812 (GIKG…SPTQ) and 853 to 877 (RLGSSSSSNTNNNNSNFSVGAAPGV). Residues 754-770 (KKSTISSPENHPASTIL) show a composition bias toward polar residues. Low complexity-rich tracts occupy residues 771 to 782 (NPNTNANNAIAN), 796 to 809 (SSSNSNPGSHSMIS), and 856 to 868 (SSSSSNTNNNNSN).

Its subcellular location is the nucleus. It is found in the cytoplasm. It localises to the cytosol. Functionally, transcription factor involved in the diauxic shift. In the presence of glucose, activates carbon and energy metabolism genes, and in te presence of glycerol-lactate, activates genes needed for cell wall maintenance. Binds to DNA elements with the sequence AAAAGAAA (A4GA3), a motif enriched in the promoters of AZF1-sensitive genes. Required for glucose induction of CLN3 transcription. Also required for proper FLO11 expression. May also function as a corepressor. As an intrinsically disordered protein, AZF1 is capable of forming the prion [AZF1+] that confers resistance to the drug radicicol in a gain-of-function manner but decreases the expression of AZF1's target genes. In Saccharomyces cerevisiae (strain ATCC 204508 / S288c) (Baker's yeast), this protein is Transcription factor AZF1.